Here is a 253-residue protein sequence, read N- to C-terminus: Peptidase inhibitor R3HDML (253 aa).

A signal peptide spans 1-23 (MPLLSSIVGLTGLLLWMGHTVGA). A propeptide spanning residues 24-56 (LRMPNTTLVQGRPKNTAVWPLSGLGVPRHRRKR) is cleaved from the precursor. N-linked (GlcNAc...) asparagine glycosylation is found at N28 and N120. The region spanning 67–207 (LDYHNHIRAS…QQAVYLVCNY (141 aa)) is the SCP domain.

Belongs to the CRISP family.

It is found in the secreted. Putative serine protease inhibitor. The protein is Peptidase inhibitor R3HDML (R3hdml) of Mus musculus (Mouse).